A 738-amino-acid chain; its full sequence is Prolyl oligopeptidase A (738 aa).

Catalysis depends on charge relay system residues Ser581, Asp665, and His701.

The protein belongs to the peptidase S9A family. Monomer.

It catalyses the reaction Hydrolysis of Pro-|-Xaa &gt;&gt; Ala-|-Xaa in oligopeptides.. Its function is as follows. Housekeeping prolyl oligopeptidase (POP) that behaves like a conventional POP by cleaving peptide bonds on the C-terminal side of prolyl residues within peptides that are up to approximately 30 amino acids long. The protein is Prolyl oligopeptidase A of Galerina marginata (strain CBS 339.88).